Consider the following 310-residue polypeptide: Thioredoxin reductase (310 aa).

Position 34–41 (34–41 (NGMQPGGQ)) interacts with FAD. A disulfide bridge links Cys135 with Cys138. 281-290 (DVQDKIYRQA) contacts FAD.

Belongs to the class-II pyridine nucleotide-disulfide oxidoreductase family. As to quaternary structure, homodimer. FAD is required as a cofactor.

It localises to the cytoplasm. The enzyme catalyses [thioredoxin]-dithiol + NADP(+) = [thioredoxin]-disulfide + NADPH + H(+). The chain is Thioredoxin reductase (trxB) from Rickettsia felis (strain ATCC VR-1525 / URRWXCal2) (Rickettsia azadi).